A 263-amino-acid polypeptide reads, in one-letter code: MEDETELCFRSNKVTRLEMFVCTYGGKISSLACSHMELIKILQIAEPVKALNCNFGHQCLPGYESLIKTPKKTKNMLRRPRKTEGDGTCFNSAIEASILFKDKMYKLKCFPSTGEIQVPGVIFPDFEDGKNIIQQWVDFLQHQPIEKKIQIIEFKTIMINFKFQINPVSPRVIIHLKKFAALLEHIPTPYPIREIKPPLEDSKVSAKFMVSPGKKVRINVFLKGKINILGCNTKESAETIYTFLKDLISVHWQEILCVLPVPD.

Belongs to the asfivirus B263R family.

Its function is as follows. Putative TATA-binding protein. This is Putative TATA-binding protein pB263R from African swine fever virus (isolate Warthog/Namibia/Wart80/1980) (ASFV).